A 313-amino-acid polypeptide reads, in one-letter code: Ribosomal RNA small subunit methyltransferase H (313 aa).

S-adenosyl-L-methionine contacts are provided by residues 33 to 35 (GGH), D53, F80, D102, and Q109. Positions 291 to 313 (SDEEMRANPRAQSAKLRAAEKIR) are disordered.

Belongs to the methyltransferase superfamily. RsmH family.

The protein resides in the cytoplasm. It catalyses the reaction cytidine(1402) in 16S rRNA + S-adenosyl-L-methionine = N(4)-methylcytidine(1402) in 16S rRNA + S-adenosyl-L-homocysteine + H(+). Its function is as follows. Specifically methylates the N4 position of cytidine in position 1402 (C1402) of 16S rRNA. This chain is Ribosomal RNA small subunit methyltransferase H, found in Heliobacterium modesticaldum (strain ATCC 51547 / Ice1).